The primary structure comprises 384 residues: Chaperone protein DnaJ (384 aa).

Residues 5–70 enclose the J domain; it reads DFYEVLGVSK…DKKAAYDRYG (66 aa). Residues 143–221 form a CR-type zinc finger; it reads GAQKTITVPG…CHGSGRIEKE (79 aa). The Zn(2+) site is built by Cys-156, Cys-159, Cys-173, Cys-176, Cys-195, Cys-198, Cys-209, and Cys-212. CXXCXGXG motif repeat units lie at residues 156–163, 173–180, 195–202, and 209–216; these read CGSCNGTG, CPTCSGLG, CPTCGGQG, and CRVCHGSG.

The protein belongs to the DnaJ family. As to quaternary structure, homodimer. Zn(2+) serves as cofactor.

The protein resides in the cytoplasm. Its function is as follows. Participates actively in the response to hyperosmotic and heat shock by preventing the aggregation of stress-denatured proteins and by disaggregating proteins, also in an autonomous, DnaK-independent fashion. Unfolded proteins bind initially to DnaJ; upon interaction with the DnaJ-bound protein, DnaK hydrolyzes its bound ATP, resulting in the formation of a stable complex. GrpE releases ADP from DnaK; ATP binding to DnaK triggers the release of the substrate protein, thus completing the reaction cycle. Several rounds of ATP-dependent interactions between DnaJ, DnaK and GrpE are required for fully efficient folding. Also involved, together with DnaK and GrpE, in the DNA replication of plasmids through activation of initiation proteins. The polypeptide is Chaperone protein DnaJ (Rhodobacter capsulatus (Rhodopseudomonas capsulata)).